We begin with the raw amino-acid sequence, 530 residues long: Autoinducer-2 kinase (530 aa).

This sequence belongs to the FGGY kinase family.

Its subcellular location is the cytoplasm. It carries out the reaction (S)-4,5-dihydroxypentane-2,3-dione + ATP = (2S)-2-hydroxy-3,4-dioxopentyl phosphate + ADP + H(+). Catalyzes the phosphorylation of autoinducer-2 (AI-2) to phospho-AI-2, which subsequently inactivates the transcriptional regulator LsrR and leads to the transcription of the lsr operon. Phosphorylates the ring-open form of (S)-4,5-dihydroxypentane-2,3-dione (DPD), which is the precursor to all AI-2 signaling molecules, at the C5 position. This chain is Autoinducer-2 kinase, found in Yersinia pseudotuberculosis serotype O:1b (strain IP 31758).